A 205-amino-acid polypeptide reads, in one-letter code: Holliday junction branch migration complex subunit RuvA (205 aa).

The domain I stretch occupies residues Met1–Ile64. The domain II stretch occupies residues Thr65 to Glu143. Residues Arg144 to Pro156 are flexible linker. Residues Thr157–Leu205 are domain III.

This sequence belongs to the RuvA family. In terms of assembly, homotetramer. Forms an RuvA(8)-RuvB(12)-Holliday junction (HJ) complex. HJ DNA is sandwiched between 2 RuvA tetramers; dsDNA enters through RuvA and exits via RuvB. An RuvB hexamer assembles on each DNA strand where it exits the tetramer. Each RuvB hexamer is contacted by two RuvA subunits (via domain III) on 2 adjacent RuvB subunits; this complex drives branch migration. In the full resolvosome a probable DNA-RuvA(4)-RuvB(12)-RuvC(2) complex forms which resolves the HJ.

The protein resides in the cytoplasm. Functionally, the RuvA-RuvB-RuvC complex processes Holliday junction (HJ) DNA during genetic recombination and DNA repair, while the RuvA-RuvB complex plays an important role in the rescue of blocked DNA replication forks via replication fork reversal (RFR). RuvA specifically binds to HJ cruciform DNA, conferring on it an open structure. The RuvB hexamer acts as an ATP-dependent pump, pulling dsDNA into and through the RuvAB complex. HJ branch migration allows RuvC to scan DNA until it finds its consensus sequence, where it cleaves and resolves the cruciform DNA. This Shewanella sp. (strain MR-4) protein is Holliday junction branch migration complex subunit RuvA.